A 178-amino-acid chain; its full sequence is Stathmin-2-A (178 aa).

The SLD domain maps to 38–178 (DDMEIKQLNK…RNKEQLELSG (141 aa)). Positions 75 to 178 (KKKDVSLGEI…RNKEQLELSG (104 aa)) form a coiled coil.

It belongs to the stathmin family. In terms of tissue distribution, nervous tissue.

The protein localises to the cytoplasm. The protein resides in the membrane. It is found in the cell projection. Its subcellular location is the lamellipodium. This is Stathmin-2-A (stmn2-a) from Xenopus laevis (African clawed frog).